Reading from the N-terminus, the 329-residue chain is Biotin synthase (329 aa).

The region spanning 46-275 (FFGRRLKLVR…LNPKAELRAS (230 aa)) is the Radical SAM core domain. 3 residues coordinate [4Fe-4S] cluster: cysteine 64, cysteine 68, and cysteine 71. [2Fe-2S] cluster is bound by residues cysteine 108, cysteine 140, cysteine 200, and arginine 273.

It belongs to the radical SAM superfamily. Biotin synthase family. In terms of assembly, homodimer. [4Fe-4S] cluster serves as cofactor. It depends on [2Fe-2S] cluster as a cofactor.

The catalysed reaction is (4R,5S)-dethiobiotin + (sulfur carrier)-SH + 2 reduced [2Fe-2S]-[ferredoxin] + 2 S-adenosyl-L-methionine = (sulfur carrier)-H + biotin + 2 5'-deoxyadenosine + 2 L-methionine + 2 oxidized [2Fe-2S]-[ferredoxin]. Its pathway is cofactor biosynthesis; biotin biosynthesis; biotin from 7,8-diaminononanoate: step 2/2. Catalyzes the conversion of dethiobiotin (DTB) to biotin by the insertion of a sulfur atom into dethiobiotin via a radical-based mechanism. This is Biotin synthase from Thermus thermophilus (strain ATCC 27634 / DSM 579 / HB8).